A 231-amino-acid polypeptide reads, in one-letter code: 2-hydroxy-3-keto-5-methylthiopentenyl-1-phosphate phosphatase (231 aa).

The protein belongs to the HAD-like hydrolase superfamily. MtnX family.

The catalysed reaction is 2-hydroxy-5-methylsulfanyl-3-oxopent-1-enyl phosphate + H2O = 1,2-dihydroxy-5-(methylsulfanyl)pent-1-en-3-one + phosphate. It participates in amino-acid biosynthesis; L-methionine biosynthesis via salvage pathway; L-methionine from S-methyl-5-thio-alpha-D-ribose 1-phosphate: step 4/6. In terms of biological role, dephosphorylates 2-hydroxy-3-keto-5-methylthiopentenyl-1-phosphate (HK-MTPenyl-1-P) yielding 1,2-dihydroxy-3-keto-5-methylthiopentene (DHK-MTPene). The polypeptide is 2-hydroxy-3-keto-5-methylthiopentenyl-1-phosphate phosphatase (Bacillus pumilus (strain SAFR-032)).